The sequence spans 130 residues: Small ribosomal subunit protein uS9 (130 aa).

This sequence belongs to the universal ribosomal protein uS9 family. As to quaternary structure, part of the 30S ribosomal subunit.

The protein is Small ribosomal subunit protein uS9 (rpsI) of Bacillus subtilis (strain 168).